Reading from the N-terminus, the 256-residue chain is Type III pantothenate kinase (256 aa).

Position 6–13 (6–13) interacts with ATP; the sequence is DIGNTNIV. 107-110 serves as a coordination point for substrate; the sequence is GADI. Residue D109 is the Proton acceptor of the active site. Position 129 (D129) interacts with K(+). T132 lines the ATP pocket. T184 is a binding site for substrate.

The protein belongs to the type III pantothenate kinase family. In terms of assembly, homodimer. NH4(+) is required as a cofactor. Requires K(+) as cofactor.

The protein localises to the cytoplasm. The catalysed reaction is (R)-pantothenate + ATP = (R)-4'-phosphopantothenate + ADP + H(+). The protein operates within cofactor biosynthesis; coenzyme A biosynthesis; CoA from (R)-pantothenate: step 1/5. Functionally, catalyzes the phosphorylation of pantothenate (Pan), the first step in CoA biosynthesis. In Bifidobacterium longum (strain DJO10A), this protein is Type III pantothenate kinase.